The primary structure comprises 668 residues: MTAFDLHAPFVPKGDQPQAIEKLTTHLQSGHSRQTLLGATGTGKTFTMAKVIEEIGKPTLILAHNKTLAAQLCNEIRSFFPNNAVEYFISYYDYYQPEAYIPVTDTFIEKTASINEEIDMLRHSATRSLFERQDVIVVASISCIYGLGIPAEYLKASIPLKVGAEVDQRQLLRNLAAVQYTRNDVDLGRGRFRVKGDVLEIGPAYEDRIIRVEFFGDEIDAIRYVDPVTGETLQSLEGLNVYPARHFVTPTERLEMAVEAIDAERTAQVEHLEGAGKLLEAQRLNQRTRYDLEMLREVGYCNGVENYSRHLAGRQAGEPPECLVDYFPKDWLLIVDESHVTVPQIRGMYNGDQARKKVLIDHGFRLPSAADNRPLKSEEFWQKVGQCVFVSATPGLWEIELSENRVVEQVIRPTGVVDPEIFVRPTTGQVDDLLAEIQERVGRQERTLITTLTKRMAEDLTEYFEERGVRVRYLHSEINAIQRIEILRDLREGVFDVLIGVNLLREGLDLPEVSLVAILDADKEGFLRAERSLIQTIGRAARHVRGQAILYADNLTDSMEKAISETERRRKIQLAYNKKHGITPQPVKKGSDNAILAFLEVSRRLNTQELEDAYEQADDLPLESVPELITQLEAQMKEAAKNLEFEEAAKYRDRIKNLRSKLLGQQSP.

The Helicase ATP-binding domain maps to 25–176 (THLQSGHSRQ…DQRQLLRNLA (152 aa)). ATP is bound at residue 38–45 (GATGTGKT). The short motif at 91–114 (YYDYYQPEAYIPVTDTFIEKTASI) is the Beta-hairpin element. In terms of domain architecture, Helicase C-terminal spans 429-591 (QVDDLLAEIQ…ITPQPVKKGS (163 aa)). The UVR domain maps to 626 to 661 (PELITQLEAQMKEAAKNLEFEEAAKYRDRIKNLRSK).

The protein belongs to the UvrB family. In terms of assembly, forms a heterotetramer with UvrA during the search for lesions. Interacts with UvrC in an incision complex.

The protein resides in the cytoplasm. The UvrABC repair system catalyzes the recognition and processing of DNA lesions. A damage recognition complex composed of 2 UvrA and 2 UvrB subunits scans DNA for abnormalities. Upon binding of the UvrA(2)B(2) complex to a putative damaged site, the DNA wraps around one UvrB monomer. DNA wrap is dependent on ATP binding by UvrB and probably causes local melting of the DNA helix, facilitating insertion of UvrB beta-hairpin between the DNA strands. Then UvrB probes one DNA strand for the presence of a lesion. If a lesion is found the UvrA subunits dissociate and the UvrB-DNA preincision complex is formed. This complex is subsequently bound by UvrC and the second UvrB is released. If no lesion is found, the DNA wraps around the other UvrB subunit that will check the other stand for damage. The sequence is that of UvrABC system protein B from Acaryochloris marina (strain MBIC 11017).